The following is a 269-amino-acid chain: Thiazole synthase (269 aa).

K109 functions as the Schiff-base intermediate with DXP in the catalytic mechanism. 1-deoxy-D-xylulose 5-phosphate-binding positions include G170, 196–197, and 218–219; these read AG and NT.

It belongs to the ThiG family. As to quaternary structure, homotetramer. Forms heterodimers with either ThiH or ThiS.

The protein resides in the plastid. The protein localises to the chloroplast. It catalyses the reaction [ThiS sulfur-carrier protein]-C-terminal-Gly-aminoethanethioate + 2-iminoacetate + 1-deoxy-D-xylulose 5-phosphate = [ThiS sulfur-carrier protein]-C-terminal Gly-Gly + 2-[(2R,5Z)-2-carboxy-4-methylthiazol-5(2H)-ylidene]ethyl phosphate + 2 H2O + H(+). It participates in cofactor biosynthesis; thiamine diphosphate biosynthesis. Its function is as follows. Catalyzes the rearrangement of 1-deoxy-D-xylulose 5-phosphate (DXP) to produce the thiazole phosphate moiety of thiamine. Sulfur is provided by the thiocarboxylate moiety of the carrier protein ThiS. In vitro, sulfur can be provided by H(2)S. The protein is Thiazole synthase of Phaeodactylum tricornutum (strain CCAP 1055/1).